Reading from the N-terminus, the 432-residue chain is Adenylosuccinate synthetase (432 aa).

Residues 12–18 (GDEGKGK) and 40–42 (GHT) each bind GTP. D13 (proton acceptor) is an active-site residue. The Mg(2+) site is built by D13 and G40. Residues 13–16 (DEGK), 38–41 (NAGH), T130, R144, Q225, T240, and R304 contribute to the IMP site. The active-site Proton donor is H41. 300 to 306 (STTGRPR) lines the substrate pocket. GTP-binding positions include R306, 332–334 (KLD), and 414–416 (SVG).

This sequence belongs to the adenylosuccinate synthetase family. In terms of assembly, homodimer. The cofactor is Mg(2+).

Its subcellular location is the cytoplasm. The catalysed reaction is IMP + L-aspartate + GTP = N(6)-(1,2-dicarboxyethyl)-AMP + GDP + phosphate + 2 H(+). Its pathway is purine metabolism; AMP biosynthesis via de novo pathway; AMP from IMP: step 1/2. In terms of biological role, plays an important role in the de novo pathway of purine nucleotide biosynthesis. Catalyzes the first committed step in the biosynthesis of AMP from IMP. The protein is Adenylosuccinate synthetase of Citrifermentans bemidjiense (strain ATCC BAA-1014 / DSM 16622 / JCM 12645 / Bem) (Geobacter bemidjiensis).